Consider the following 505-residue polypeptide: Exodeoxyribonuclease 7 large subunit (505 aa).

The segment at Ser466–Phe505 is disordered. Residues Ala480–Pro497 show a composition bias toward pro residues.

The protein belongs to the XseA family. Heterooligomer composed of large and small subunits.

The protein resides in the cytoplasm. It catalyses the reaction Exonucleolytic cleavage in either 5'- to 3'- or 3'- to 5'-direction to yield nucleoside 5'-phosphates.. Its function is as follows. Bidirectionally degrades single-stranded DNA into large acid-insoluble oligonucleotides, which are then degraded further into small acid-soluble oligonucleotides. The polypeptide is Exodeoxyribonuclease 7 large subunit (Caulobacter vibrioides (strain NA1000 / CB15N) (Caulobacter crescentus)).